The following is a 720-amino-acid chain: Asp/Glu-specific dipeptidyl-peptidase (720 aa).

Positions M1 to A21 are cleaved as a signal peptide. A disulfide bridge links C69 with C86. Residues H85, D227, and S655 each act as charge relay system in the active site.

It belongs to the peptidase S46 family. In terms of assembly, homodimer.

The protein localises to the cell surface. With respect to regulation, enzyme activity is completely blocked by diisopropyl-fluorophosphates, moderately by phenylmethylsulfonyl fluoride (PMSF) and 4-(2-methyl)benzenesulfonyl fluoride, and slightly by pepstatin in vitro. Catalyzes the removal of dipeptides from the N-terminus of oligopeptides. Shows a strict specificity for acidic residues (Asp or Glu) in the P1 position, and has a hydrophobic residue preference at the P2 position. Preferentially cleaves the synthetic substrate Leu-Asp-methylcoumaryl-7-amide (Leu-Asp-MCA) as compared to Leu-Glu-MCA. Is involved in amino acid metabolism and bacterial growth of asaccharolytic P.gingivalis, that utilizes amino acids from extracellular proteinaceous nutrients as energy and carbon sources. This is Asp/Glu-specific dipeptidyl-peptidase from Porphyromonas gingivalis (strain ATCC 33277 / DSM 20709 / CIP 103683 / JCM 12257 / NCTC 11834 / 2561).